The sequence spans 222 residues: UPF0502 protein SO_1867 (222 aa).

The segment covering 169-193 has biased composition (polar residues); the sequence is EQVSATSLSADSPSADSNSLNAQDR. The tract at residues 169 to 195 is disordered; it reads EQVSATSLSADSPSADSNSLNAQDRQQ.

Belongs to the UPF0502 family.

This is UPF0502 protein SO_1867 from Shewanella oneidensis (strain ATCC 700550 / JCM 31522 / CIP 106686 / LMG 19005 / NCIMB 14063 / MR-1).